We begin with the raw amino-acid sequence, 134 residues long: MAGQSDKDVKYYTLEEIQKHKDSKSTWVILHHKVYDLTKFLEEHPGGEEVLREQAGGDATENFEDVGHSTDARELSKTYIIGELHPDDRSKIAKPSDTLITTVESNSSWWTNWVIPAISALAVALMYRLYMAED.

A2 is subject to N-acetylalanine. N6-acetyllysine is present on residues K7, K10, and K19. Positions 9 to 85 (VKYYTLEEIQ…SKTYIIGELH (77 aa)) constitute a Cytochrome b5 heme-binding domain. Heme is bound by residues H44 and H68. Residues 109–131 (WWTNWVIPAISALAVALMYRLYM) form a helical membrane-spanning segment.

Belongs to the cytochrome b5 family.

It is found in the endoplasmic reticulum membrane. The protein resides in the microsome membrane. Its function is as follows. Cytochrome b5 is a membrane-bound hemoprotein functioning as an electron carrier for several membrane-bound oxygenases. It is also involved in several steps of the sterol biosynthesis pathway, particularly in the C-5 double bond introduction during the C-5 desaturation. This Mus musculus (Mouse) protein is Cytochrome b5 (Cyb5a).